The sequence spans 495 residues: Putative aldehyde dehydrogenase AldA (495 aa).

212 to 218 (GKGSESG) is an NAD(+) binding site. Active-site residues include E256 and C290.

The protein belongs to the aldehyde dehydrogenase family.

It catalyses the reaction an aldehyde + NAD(+) + H2O = a carboxylate + NADH + 2 H(+). The chain is Putative aldehyde dehydrogenase AldA (aldA) from Staphylococcus aureus (strain bovine RF122 / ET3-1).